The chain runs to 427 residues: MLESLTLQPIALINGTVNLPGSKSVSNRALLLAALAEGTTRLHNLLDSDDIRHMLNALKSLGVNYRLSADRTQCDVDGLGGPLVADKTLELFLGNAGTAMRPLAAALCLGYSDIVLTGEERMKERPIGHLVDALEGGAQIDYLEQENYPPLRIRGGFRGGELTVDGSVSSQFLTALLMAAPLATQDTHIRIQGDLVSRPYIDITLHLMRSFGVEVTHQNYQVFHIQGGQTYHSPGEYLVEGDASSASYFLAAAAIKGGTVRVTGIGKKSVQGDTKFADVLEKMGAIIHWGDDYIECSRGELRDIDMDMNHIPDAAMTIATAALFAKGPTIIRNIYNWRVKETDRLSAMATELRKVGAEVEEGQDYIRVVPPAHLIAAEIGTYNDHRMAMCFSLVALSDTPVTILDPKCTAKTFPDYFEQLARLSVLA.

3-phosphoshikimate is bound by residues Lys23, Ser24, and Arg28. Lys23 contributes to the phosphoenolpyruvate binding site. Phosphoenolpyruvate is bound by residues Gly97 and Arg125. Residues Ser169, Ser170, Gln171, Ser197, Asp313, Asn336, and Lys340 each contribute to the 3-phosphoshikimate site. Gln171 is a binding site for phosphoenolpyruvate. The active-site Proton acceptor is the Asp313. The phosphoenolpyruvate site is built by Arg344, Arg386, and Lys411.

This sequence belongs to the EPSP synthase family. Monomer.

Its subcellular location is the cytoplasm. The enzyme catalyses 3-phosphoshikimate + phosphoenolpyruvate = 5-O-(1-carboxyvinyl)-3-phosphoshikimate + phosphate. It participates in metabolic intermediate biosynthesis; chorismate biosynthesis; chorismate from D-erythrose 4-phosphate and phosphoenolpyruvate: step 6/7. Its function is as follows. Catalyzes the transfer of the enolpyruvyl moiety of phosphoenolpyruvate (PEP) to the 5-hydroxyl of shikimate-3-phosphate (S3P) to produce enolpyruvyl shikimate-3-phosphate and inorganic phosphate. The chain is 3-phosphoshikimate 1-carboxyvinyltransferase from Yersinia ruckeri.